The primary structure comprises 382 residues: Succinyl-diaminopimelate desuccinylase (382 aa).

H70 lines the Zn(2+) pocket. D72 is an active-site residue. D103 serves as a coordination point for Zn(2+). E137 acts as the Proton acceptor in catalysis. E138, E166, and H355 together coordinate Zn(2+).

It belongs to the peptidase M20A family. DapE subfamily. As to quaternary structure, homodimer. Zn(2+) serves as cofactor. It depends on Co(2+) as a cofactor.

It carries out the reaction N-succinyl-(2S,6S)-2,6-diaminopimelate + H2O = (2S,6S)-2,6-diaminopimelate + succinate. The protein operates within amino-acid biosynthesis; L-lysine biosynthesis via DAP pathway; LL-2,6-diaminopimelate from (S)-tetrahydrodipicolinate (succinylase route): step 3/3. Catalyzes the hydrolysis of N-succinyl-L,L-diaminopimelic acid (SDAP), forming succinate and LL-2,6-diaminopimelate (DAP), an intermediate involved in the bacterial biosynthesis of lysine and meso-diaminopimelic acid, an essential component of bacterial cell walls. In Paracoccus denitrificans (strain Pd 1222), this protein is Succinyl-diaminopimelate desuccinylase.